Reading from the N-terminus, the 217-residue chain is MLO-like protein (217 aa).

3 helical membrane passes run 35 to 55 (FKVVVGISPILWFFAVLFLLS), 59 to 79 (GWVAYLWLPFIPLIIILVVGT), and 119 to 139 (LVLFLIHFCLFQNAFQLAFFI).

The protein belongs to the MLO family.

It is found in the membrane. May be involved in modulation of pathogen defense and leaf cell death. The chain is MLO-like protein from Linum usitatissimum (Flax).